Here is a 706-residue protein sequence, read N- to C-terminus: MAGVSFSGHRLELLAAYEEVIREESAADWALYTYEDGSDDLKLAASGEGGLQELSGHFENQKVMYGFCSVKDSQAALPKYVLINWVGEDVPDARKCACASHVAKVAEFFQGVDVIVNASSVEDIDAGAIGQRLSNGLARLSSPVLHRLRLREDENAEPVGTTYQKTDAAVEMKRINREQFWEQAKKEEELRKEEERKKALDARLRFEQERMEQERQEQEERERRYREREQQIEEHRRKQQSLEAEEAKRRLKEQSIFGDQRDEEEESQMKKSESEVEEAAAIIAQRPDNPREFFRQQERVASASGGSCDAPAPAPFNHRPGRPYCPFIKASDSGPSSSSSSSSSPPRTPFPYITCHRTPNLSSSLPCSHLDSHRRMAPTPIPTRSPSDSSTASTPIAEQIERALDEVTSSQPPPPPPPPPPTQEAQETTPSLDEELSKEAKVTAAPEVWAGCAAEPPQAQEPPLLQSSPLEDSMCTESPEQAALAAPAEPAASVTSVADVHAADTIETTTATTDTTIANNVTPAAASLIDLWPGNGEEASTLQAEPRVPTPPSGAEASLAEVPLLNEAAQEPLPPVGEGCANLLNFDELPEPPATFCDPEEEVGETLAASQVLTMPSALEEVDQVLEQELEPEPHLLTNGETTQKEGTQASEGYFSQSQEEEFAQSEEPCAKVPPPVFYNKPPEIDITCWDADPVPEEEEGFEGGD.

At Ala2 the chain carries N-acetylalanine. Residues 3–134 enclose the ADF-H domain; the sequence is GVSFSGHRLE…DAGAIGQRLS (132 aa). Ser141 and Ser142 each carry phosphoserine. The segment covering 209–236 has biased composition (basic and acidic residues); the sequence is ERMEQERQEQEERERRYREREQQIEEHR. A disordered region spans residues 209–497; the sequence is ERMEQERQEQ…AEPAASVTSV (289 aa). Ser241 bears the Phosphoserine mark. Basic and acidic residues predominate over residues 288-298; the sequence is DNPREFFRQQE. A compositionally biased stretch (low complexity) spans 331-345; it reads SDSGPSSSSSSSSSP. Phosphoserine is present on Ser344. Positions 357 to 366 are enriched in polar residues; that stretch reads RTPNLSSSLP. Phosphothreonine is present on residues Thr379 and Thr383. The span at 382-396 shows a compositional bias: polar residues; sequence PTRSPSDSSTASTPI. Ser385, Ser387, and Ser393 each carry phosphoserine. Position 394 is a phosphothreonine (Thr394). Residues 411–422 show a composition bias toward pro residues; the sequence is QPPPPPPPPPPT. A compositionally biased stretch (low complexity) spans 453–497; sequence AAEPPQAQEPPLLQSSPLEDSMCTESPEQAALAAPAEPAASVTSV. Ser468 is subject to Phosphoserine. Thr550 carries the post-translational modification Phosphothreonine. Residues 633–677 are disordered; sequence EPHLLTNGETTQKEGTQASEGYFSQSQEEEFAQSEEPCAKVPPPV. The span at 639 to 651 shows a compositional bias: polar residues; it reads NGETTQKEGTQAS. Phosphoserine is present on Ser658.

In terms of assembly, interacts with RUFY3. Interacts with CXCR4; this interaction is enhanced by antigenic stimulation. Interacts (via ADF-H domain) with ZMYND8 (via N-terminus); the interaction leads to sequestering of ZMYND8 in the cytoplasm. Expressed in the hippocampus, with expression in the pyramidal cells of CA1, CA2 and CA3 and in the granule cells of the dentate gyrus (at protein level). Highly expressed in brain, also present in stomach and to a lesser degree in kidney, colon, and urinary bladder. The E2 isoform is specifically expressed in adult stomach, kidney, and cultured cells.

The protein localises to the cytoplasm. It is found in the cell projection. The protein resides in the dendrite. Its subcellular location is the cell cortex. It localises to the cell junction. The protein localises to the growth cone. Functionally, actin cytoskeleton-organizing protein that plays a role in the formation of cell projections. Required for actin polymerization at immunological synapses (IS) and for the recruitment of the chemokine receptor CXCR4 to IS. Plays a role in dendritic spine morphogenesis and organization, including the localization of the dopamine receptor DRD1 to the dendritic spines. Involved in memory-related synaptic plasticity in the hippocampus. The sequence is that of Drebrin (Dbn1) from Mus musculus (Mouse).